Consider the following 342-residue polypeptide: Signal-regulatory protein beta-2 (342 aa).

Residues M1 to G32 form the signal peptide. Ig-like V-type domains lie at Q33 to E143 and P157 to G258. Topologically, residues Q33 to G287 are extracellular. Cysteines 60 and 127 form a disulfide. N-linked (GlcNAc...) asparagine glycans are attached at residues N116, N179, and N231. C180 and C242 are disulfide-bonded. A helical membrane pass occupies residues L288–L308. Over L309 to E342 the chain is Cytoplasmic. Residues S317–E342 form a disordered region.

Its subcellular location is the membrane. In Homo sapiens (Human), this protein is Signal-regulatory protein beta-2 (SIRPB2).